A 258-amino-acid polypeptide reads, in one-letter code: Imidazole glycerol phosphate synthase subunit HisF (258 aa).

Active-site residues include Asp-12 and Asp-131.

This sequence belongs to the HisA/HisF family. In terms of assembly, heterodimer of HisH and HisF.

It is found in the cytoplasm. It catalyses the reaction 5-[(5-phospho-1-deoxy-D-ribulos-1-ylimino)methylamino]-1-(5-phospho-beta-D-ribosyl)imidazole-4-carboxamide + L-glutamine = D-erythro-1-(imidazol-4-yl)glycerol 3-phosphate + 5-amino-1-(5-phospho-beta-D-ribosyl)imidazole-4-carboxamide + L-glutamate + H(+). Its pathway is amino-acid biosynthesis; L-histidine biosynthesis; L-histidine from 5-phospho-alpha-D-ribose 1-diphosphate: step 5/9. IGPS catalyzes the conversion of PRFAR and glutamine to IGP, AICAR and glutamate. The HisF subunit catalyzes the cyclization activity that produces IGP and AICAR from PRFAR using the ammonia provided by the HisH subunit. The chain is Imidazole glycerol phosphate synthase subunit HisF from Nitrosomonas europaea (strain ATCC 19718 / CIP 103999 / KCTC 2705 / NBRC 14298).